The sequence spans 564 residues: CTP synthase (564 aa).

The tract at residues 1–265 (MTKFVFVTGG…DEIVCHRLDI (265 aa)) is amidoligase domain. A CTP-binding site is contributed by S13. S13 contributes to the UTP binding site. ATP-binding positions include 14–19 (SLGKGI) and D71. Mg(2+) contacts are provided by D71 and E139. CTP contacts are provided by residues 146–148 (DIE), 186–191 (KTKPTQ), and K222. Residues 186-191 (KTKPTQ) and K222 contribute to the UTP site. A Glutamine amidotransferase type-1 domain is found at 290-543 (SIALVGKYVD…IQAAISFAGQ (254 aa)). G351 contributes to the L-glutamine binding site. The active-site Nucleophile; for glutamine hydrolysis is the C378. L-glutamine-binding positions include 379–382 (LGMQ), E402, and R469. Catalysis depends on residues H516 and E518.

The protein belongs to the CTP synthase family. In terms of assembly, homotetramer.

The catalysed reaction is UTP + L-glutamine + ATP + H2O = CTP + L-glutamate + ADP + phosphate + 2 H(+). It catalyses the reaction L-glutamine + H2O = L-glutamate + NH4(+). The enzyme catalyses UTP + NH4(+) + ATP = CTP + ADP + phosphate + 2 H(+). Its pathway is pyrimidine metabolism; CTP biosynthesis via de novo pathway; CTP from UDP: step 2/2. Allosterically activated by GTP, when glutamine is the substrate; GTP has no effect on the reaction when ammonia is the substrate. The allosteric effector GTP functions by stabilizing the protein conformation that binds the tetrahedral intermediate(s) formed during glutamine hydrolysis. Inhibited by the product CTP, via allosteric rather than competitive inhibition. In terms of biological role, catalyzes the ATP-dependent amination of UTP to CTP with either L-glutamine or ammonia as the source of nitrogen. Regulates intracellular CTP levels through interactions with the four ribonucleotide triphosphates. This Nitrosomonas europaea (strain ATCC 19718 / CIP 103999 / KCTC 2705 / NBRC 14298) protein is CTP synthase.